The primary structure comprises 154 residues: Nuclear cap-binding protein subunit 2-A (154 aa).

MRNA is bound by residues Tyr10, Tyr33, 102 to 106 (RVDWD), 113 to 117 (RQYGR), and 123 to 124 (QV). Positions 30–108 (STLYVGNLSF…RLIRVDWDAG (79 aa)) constitute an RRM domain.

Belongs to the RRM NCBP2 family. In terms of assembly, component of the nuclear cap-binding complex (CBC), a heterodimer composed of Cbp80 and Cbp20 that interacts with m7GpppG-capped RNA. Interacts with Ars2.

It localises to the nucleus. Its function is as follows. Component of the cap-binding complex (CBC), which binds co-transcriptionally to the 5' cap of pre-mRNAs and is involved in various processes such as pre-mRNA splicing and RNA-mediated gene silencing (RNAi). The CBC complex is involved in miRNA-mediated RNA interference via its interaction with Ars2 and is required for primary microRNAs (miRNAs) processing. Also involved in innate immunity via the short interfering RNAs (siRNAs) processing machinery by restricting the viral RNA production. In the CBC complex, Cbp20 recognizes and binds capped RNAs (m7GpppG-capped RNA) but requires Cbp80 to stabilize the movement of its N-terminal loop and lock the CBC into a high affinity cap-binding state with the cap structure. The chain is Nuclear cap-binding protein subunit 2-A (Cbp20-A) from Drosophila virilis (Fruit fly).